A 637-amino-acid polypeptide reads, in one-letter code: Chaperone protein DnaK (637 aa).

A Phosphothreonine; by autocatalysis modification is found at Thr-198. Residues 601–615 (AQQKAQAEQAGADAG) are compositionally biased toward low complexity. A disordered region spans residues 601–637 (AQQKAQAEQAGADAGEQPKQDDDVVDAEFEEVKEDKK). Positions 623 to 637 (DVVDAEFEEVKEDKK) are enriched in acidic residues.

It belongs to the heat shock protein 70 family.

Acts as a chaperone. The polypeptide is Chaperone protein DnaK (Vibrio atlanticus (strain LGP32) (Vibrio splendidus (strain Mel32))).